The chain runs to 1099 residues: Exonuclease/helicase subunit RexB (1099 aa).

[4Fe-4S] cluster contacts are provided by C766, C1056, C1059, and C1065.

It belongs to the helicase family. AddB/RexB type 2 subfamily. Heterodimer of RexA (AddA) and RexB. It depends on Mg(2+) as a cofactor. Requires [4Fe-4S] cluster as cofactor.

The heterodimer acts both as an ATP-dependent DNA helicase and an ATP-dependent, dual-direction single-stranded exonuclease. Recognizes the L.lactis chi site (5'-GCGCGTG-3'), which stimulates homologous recombination. This subunit has 5'-&gt;3' exonuclease activity. Functionally, the heterodimer acts as both an ATP-dependent DNA helicase and an ATP-dependent, dual-direction single-stranded exonuclease. Recognizes the chi site generating a DNA molecule suitable for the initiation of homologous recombination. This subunit has 5' -&gt; 3' nuclease activity but not helicase activity. The chain is Exonuclease/helicase subunit RexB from Lactococcus lactis subsp. cremoris (strain MG1363).